The primary structure comprises 332 residues: Ribonucleoside-diphosphate reductase small chain C (332 aa).

Residues Asp-76, Glu-107, and His-110 each contribute to the Fe cation site. Residue Tyr-114 is part of the active site. Positions 169, 203, and 206 each coordinate Fe cation.

It belongs to the ribonucleoside diphosphate reductase small chain family. Homodimer and heterodimer with RNR2A. Heterotetramer of two R1 and two R2 chains. Interacts with CSN7 (via C-terminal tail). Requires Fe cation as cofactor. In terms of tissue distribution, expressed in roots, cauline and rosette leaves, stems and flowers.

The protein localises to the cytoplasm. The protein resides in the nucleus. It catalyses the reaction a 2'-deoxyribonucleoside 5'-diphosphate + [thioredoxin]-disulfide + H2O = a ribonucleoside 5'-diphosphate + [thioredoxin]-dithiol. In terms of biological role, provides the precursors necessary for DNA synthesis. Catalyzes the biosynthesis of deoxyribonucleotides from the corresponding ribonucleotides. Involved in DNA damage repair and programmed cell death inhibition. The chain is Ribonucleoside-diphosphate reductase small chain C (TSO2) from Arabidopsis thaliana (Mouse-ear cress).